The primary structure comprises 691 residues: Threonine--tRNA ligase (691 aa).

The tract at residues Met-1–Val-22 is disordered. Positions Met-1–Ala-73 constitute a TGS domain. The tract at residues Asp-268 to Pro-574 is catalytic. Residues Cys-373, His-424, and His-551 each contribute to the Zn(2+) site.

This sequence belongs to the class-II aminoacyl-tRNA synthetase family. As to quaternary structure, homodimer. Zn(2+) serves as cofactor.

The protein localises to the cytoplasm. The enzyme catalyses tRNA(Thr) + L-threonine + ATP = L-threonyl-tRNA(Thr) + AMP + diphosphate + H(+). Catalyzes the attachment of threonine to tRNA(Thr) in a two-step reaction: L-threonine is first activated by ATP to form Thr-AMP and then transferred to the acceptor end of tRNA(Thr). Also edits incorrectly charged L-seryl-tRNA(Thr). The chain is Threonine--tRNA ligase from Mycobacterium ulcerans (strain Agy99).